The sequence spans 508 residues: Carboxypeptidase Y homolog ARB_05721 (508 aa).

A signal peptide spans 1 to 25; it reads MELYLNMLSFWYILLATSFFGPSQA. Residues asparagine 132 and asparagine 169 are each glycosylated (N-linked (GlcNAc...) asparagine). Residue serine 204 is part of the active site. N-linked (GlcNAc...) asparagine glycosylation occurs at asparagine 268. Intrachain disulfides connect cysteine 282-cysteine 305, cysteine 289-cysteine 298, and cysteine 332-cysteine 338. Aspartate 410 is a catalytic residue. Cysteine 413 is a substrate binding site. Asparagine 451 carries an N-linked (GlcNAc...) asparagine glycan. The active site involves histidine 484. Methionine 485 serves as a coordination point for substrate.

It belongs to the peptidase S10 family.

The protein localises to the secreted. It catalyses the reaction Release of a C-terminal amino acid with broad specificity.. Functionally, involved in degradation of small peptides. This Arthroderma benhamiae (strain ATCC MYA-4681 / CBS 112371) (Trichophyton mentagrophytes) protein is Carboxypeptidase Y homolog ARB_05721.